A 99-amino-acid chain; its full sequence is Nucleoid-associated protein SpyM3_1606 (99 aa).

Belongs to the YbaB/EbfC family. Homodimer.

It localises to the cytoplasm. It is found in the nucleoid. Binds to DNA and alters its conformation. May be involved in regulation of gene expression, nucleoid organization and DNA protection. This chain is Nucleoid-associated protein SpyM3_1606, found in Streptococcus pyogenes serotype M3 (strain ATCC BAA-595 / MGAS315).